The chain runs to 366 residues: Bacteriochlorophyll a protein (366 aa).

Bacteriochlorophyll a contacts are provided by H110, H145, H290, H297, and H298.

Homotrimer. Each subunit contains 7 molecules of bacteriochlorophyll a.

Functionally, intermediary in the transfer of excitation energy from the chlorophyll to the reaction centers. The chain is Bacteriochlorophyll a protein from Prosthecochloris aestuarii.